Reading from the N-terminus, the 90-residue chain is U7-theraphotoxin-Hhn1a 4 (90 aa).

The first 19 residues, 1–19, serve as a signal peptide directing secretion; that stretch reads MKTAIFTVVLALAVFAVLS. The propeptide occupies 20 to 50; sequence FGWEANEEALSEEFTELIHEKEAASETEARE. Cystine bridges form between C51–C65, C58–C70, and C64–C81.

It belongs to the neurotoxin 10 (Hwtx-1) family. 13 (Hntx-13) subfamily. As to expression, expressed by the venom gland.

The protein localises to the secreted. In terms of biological role, ion channel inhibitor. This chain is U7-theraphotoxin-Hhn1a 4, found in Cyriopagopus hainanus (Chinese bird spider).